A 3054-amino-acid polypeptide reads, in one-letter code: Genome polyprotein (3054 aa).

Residues 163–304 (FLPATSLSNV…FAVCHSMTHY (142 aa)) form the Peptidase S30 domain. Residues His214, Asp223, and Ser256 each act as for P1 proteinase activity in the active site. The Involved in interaction with stylet and aphid transmission motif lies at 358–361 (KITC). Positions 615-617 (PTK) match the Involved in virions binding and aphid transmission motif. Positions 641 to 763 (MYIANEGYCY…ESEMKTYNVG (123 aa)) constitute a Peptidase C6 domain. Residues Cys649 and His722 each act as for helper component proteinase activity in the active site. The 153-residue stretch at 1234-1386 (EISHSPARDF…TQFPVKLKIE (153 aa)) folds into the Helicase ATP-binding domain. 1247–1254 (GAVGSGKS) contacts ATP. Positions 1336 to 1339 (DECH) match the DECH box motif. Residues 1401-1564 (GANADVISCG…NLPVTTQSVS (164 aa)) enclose the Helicase C-terminal domain. A Nuclear localization signal motif is present at residues 1889–1896 (NKGKRKGT). Tyr1911 is subject to O-(5'-phospho-RNA)-tyrosine. Residues 2038–2255 (GESLFKGPRD…VLWGGHKVFM (218 aa)) form the Peptidase C4 domain. Active-site for nuclear inclusion protein A activity residues include His2083, Asp2118, and Cys2188. Residues 2521-2641 (WVYCDADGSQ…AIHPDKAERL (121 aa)) enclose the RdRp catalytic domain. The tract at residues 2798 to 2827 (GADAGKKKDQKDDKVAEQASKDRDVNAGTS) is disordered. Positions 2801 to 2822 (AGKKKDQKDDKVAEQASKDRDV) are enriched in basic and acidic residues. Thr3038 carries the phosphothreonine modification.

It belongs to the potyviridae genome polyprotein family. As to quaternary structure, interacts with host eIF4E protein (via cap-binding region); this interaction mediates the translation of the VPg-viral RNA conjugates. Part of a complex that comprises VPg, RNA, host EIF4E and EIF4G; this interaction mediates the translation of the VPg-viral RNA conjugates. Interaction is possible in susceptible hosts but impaired in resistant plants: the VPg of strain HAT interacts with tomato eIF4E1 and eIF4E2 as well as with Capsicum annuum eIF4E1 susceptible alleles pvr2(+), pvr2(3) and pvr2(9) but not with the resistant allele pvr2(2), the VPg of strain CAA10 interacts with C.annuum eIF4E1 susceptible alleles pvr2(+), pvr2(2), pvr2(3) and pvr2(9), the VPg of strain NW interacts at least with C.annuum eIF4E1. Homodimer; disulfide-linked. VPg is uridylylated by the polymerase and is covalently attached to the 5'-end of the genomic RNA. This uridylylated form acts as a nucleotide-peptide primer for the polymerase. Post-translationally, potyviral RNA is expressed as two polyproteins which undergo post-translational proteolytic processing. Genome polyprotein is processed by NIa-pro, P1 and HC-pro proteinases resulting in the production of at least ten individual proteins. P3N-PIPO polyprotein is cleaved by P1 and HC-pro proteinases resulting in the production of three individual proteins. The P1 proteinase and the HC-pro cleave only their respective C-termini autocatalytically. 6K1 is essential for proper proteolytic separation of P3 from CI.

It is found in the host cytoplasmic vesicle. The protein localises to the host nucleus. Its subcellular location is the virion. The catalysed reaction is RNA(n) + a ribonucleoside 5'-triphosphate = RNA(n+1) + diphosphate. It carries out the reaction Hydrolyzes glutaminyl bonds, and activity is further restricted by preferences for the amino acids in P6 - P1' that vary with the species of potyvirus, e.g. Glu-Xaa-Xaa-Tyr-Xaa-Gln-|-(Ser or Gly) for the enzyme from tobacco etch virus. The natural substrate is the viral polyprotein, but other proteins and oligopeptides containing the appropriate consensus sequence are also cleaved.. The enzyme catalyses Hydrolyzes a Gly-|-Gly bond at its own C-terminus, commonly in the sequence -Tyr-Xaa-Val-Gly-|-Gly, in the processing of the potyviral polyprotein.. In terms of biological role, required for aphid transmission and also has proteolytic activity. Only cleaves a Gly-Gly dipeptide at its own C-terminus. Interacts with virions and aphid stylets. Acts as a suppressor of RNA-mediated gene silencing, also known as post-transcriptional gene silencing (PTGS), a mechanism of plant viral defense that limits the accumulation of viral RNAs. May have RNA-binding activity. Has helicase activity. It may be involved in replication. Functionally, indispensable for virus replication. Reduces the abundance of host transcripts related to jasmonic acid biosynthesis therefore altering the host defenses. In order to increase its own stability, decreases host protein degradation pathways. Its function is as follows. Indispensable for virus replication. In terms of biological role, mediates the cap-independent, EIF4E-dependent translation of viral genomic RNAs. Binds to the cap-binding site of host EIF4E and thus interferes with the host EIF4E-dependent mRNA export and translation. VPg-RNA directly binds EIF4E and is a template for transcription. Also forms trimeric complexes with EIF4E-EIF4G, which are templates for translation. Has RNA-binding and proteolytic activities. Functionally, an RNA-dependent RNA polymerase that plays an essential role in the virus replication. Its function is as follows. Involved in aphid transmission, cell-to-cell and systemis movement, encapsidation of the viral RNA and in the regulation of viral RNA amplification. This is Genome polyprotein from Capsicum annuum (Capsicum pepper).